A 250-amino-acid chain; its full sequence is Triosephosphate isomerase (250 aa).

Residue 9–11 participates in substrate binding; the sequence is NWK. Catalysis depends on H95, which acts as the Electrophile. The Proton acceptor role is filled by E167. Substrate-binding positions include G173, S213, and 234-235; that span reads GG.

It belongs to the triosephosphate isomerase family. In terms of assembly, homodimer.

It localises to the cytoplasm. It catalyses the reaction D-glyceraldehyde 3-phosphate = dihydroxyacetone phosphate. It functions in the pathway carbohydrate biosynthesis; gluconeogenesis. It participates in carbohydrate degradation; glycolysis; D-glyceraldehyde 3-phosphate from glycerone phosphate: step 1/1. Functionally, involved in the gluconeogenesis. Catalyzes stereospecifically the conversion of dihydroxyacetone phosphate (DHAP) to D-glyceraldehyde-3-phosphate (G3P). This Herpetosiphon aurantiacus (strain ATCC 23779 / DSM 785 / 114-95) protein is Triosephosphate isomerase.